Reading from the N-terminus, the 156-residue chain is Endoribonuclease YbeY (156 aa).

Zn(2+) is bound by residues H114, H118, and H124.

The protein belongs to the endoribonuclease YbeY family. Zn(2+) is required as a cofactor.

Its subcellular location is the cytoplasm. Single strand-specific metallo-endoribonuclease involved in late-stage 70S ribosome quality control and in maturation of the 3' terminus of the 16S rRNA. The polypeptide is Endoribonuclease YbeY (Sodalis glossinidius (strain morsitans)).